A 738-amino-acid polypeptide reads, in one-letter code: 1,4-alpha-glucan branching enzyme GlgB (738 aa).

Aspartate 417 acts as the Nucleophile in catalysis. Residue glutamate 472 is the Proton donor of the active site.

Belongs to the glycosyl hydrolase 13 family. GlgB subfamily. Monomer.

It catalyses the reaction Transfers a segment of a (1-&gt;4)-alpha-D-glucan chain to a primary hydroxy group in a similar glucan chain.. Its pathway is glycan biosynthesis; glycogen biosynthesis. In terms of biological role, catalyzes the formation of the alpha-1,6-glucosidic linkages in glycogen by scission of a 1,4-alpha-linked oligosaccharide from growing alpha-1,4-glucan chains and the subsequent attachment of the oligosaccharide to the alpha-1,6 position. In Burkholderia pseudomallei (strain K96243), this protein is 1,4-alpha-glucan branching enzyme GlgB.